A 360-amino-acid polypeptide reads, in one-letter code: MKASLLNKLEILQDRFEELTALLGDAEVISDQTRFRAYSREYAEVEPVYAAYKEWRKVQDDLEGAQALLKDSDPDLREMALEEVREAKEQLLTLEAQLQRMLLPKDPNDGRNVFLEIRAGTGGDEAAIFSGDLFRMYSRYAEKRGWRLEILSENEGEHGGYKEIIARVEGENVYGKLKFESGAHRVQRVPETESQGRVHTSACTVAVLPEPDEQAAIEINPADLRVDTYRASGAGGQHVNKTDSAIRITHLPTGIVVECQEERSQHKNRARAMSWLSAKLNDMQTSAAQNAIASERKLLVGSGDRSERIRTYNYPQGRVTDHRINLTLYSLDDILSGGVDAVIEPLLAEYQADQLAALGD.

Gln-237 carries the post-translational modification N5-methylglutamine.

Belongs to the prokaryotic/mitochondrial release factor family. Methylated by PrmC. Methylation increases the termination efficiency of RF1.

The protein localises to the cytoplasm. Peptide chain release factor 1 directs the termination of translation in response to the peptide chain termination codons UAG and UAA. This Pseudomonas putida (strain ATCC 700007 / DSM 6899 / JCM 31910 / BCRC 17059 / LMG 24140 / F1) protein is Peptide chain release factor 1.